Consider the following 965-residue polypeptide: 26S proteasome regulatory subunit rpn2 (965 aa).

10 PC repeats span residues 385 to 418 (TATA…PSSS), 424 to 457 (GAFY…EIVQ), 459 to 493 (GLLL…VAGS), 494 to 528 (AAGI…EKII), 530 to 563 (GLGI…TLRY), 564 to 599 (AGMF…DVRR), 600 to 632 (AAVC…PHVR), 634 to 668 (GSAI…FVRQ), 669 to 699 (GAMI…FEQV), and 712 to 744 (GATL…SAIV). 2 disordered regions span residues 826–883 (AKRA…KSET) and 934–965 (NRDA…DDDD). Composition is skewed to basic and acidic residues over residues 827–856 (KRAE…KEAT) and 874–883 (SKKEEPKSET). Residues 945-965 (EPGEQEASPPEDFEYPFDDDD) show a composition bias toward acidic residues. S952 bears the Phosphoserine mark.

The protein belongs to the proteasome subunit S1 family.

In terms of biological role, acts as a regulatory subunit of the 26S proteasome which is involved in the ATP-dependent degradation of ubiquitinated proteins. The sequence is that of 26S proteasome regulatory subunit rpn2 (rpn2) from Schizosaccharomyces pombe (strain 972 / ATCC 24843) (Fission yeast).